A 247-amino-acid polypeptide reads, in one-letter code: Carboxy-S-adenosyl-L-methionine synthase (247 aa).

S-adenosyl-L-methionine is bound by residues tyrosine 38, 63–65 (GCS), asparagine 131, and arginine 198.

This sequence belongs to the class I-like SAM-binding methyltransferase superfamily. Cx-SAM synthase family. In terms of assembly, homodimer.

It carries out the reaction prephenate + S-adenosyl-L-methionine = carboxy-S-adenosyl-L-methionine + 3-phenylpyruvate + H2O. Its function is as follows. Catalyzes the conversion of S-adenosyl-L-methionine (SAM) to carboxy-S-adenosyl-L-methionine (Cx-SAM). This chain is Carboxy-S-adenosyl-L-methionine synthase, found in Desulforapulum autotrophicum (strain ATCC 43914 / DSM 3382 / VKM B-1955 / HRM2) (Desulfobacterium autotrophicum).